Consider the following 224-residue polypeptide: UPF0758 protein PSPA7_6095 (224 aa).

The 123-residue stretch at Val102–Met224 folds into the MPN domain. His173, His175, and Asp186 together coordinate Zn(2+). A JAMM motif motif is present at residues His173 to Asp186.

The protein belongs to the UPF0758 family.

The sequence is that of UPF0758 protein PSPA7_6095 from Pseudomonas paraeruginosa (strain DSM 24068 / PA7) (Pseudomonas aeruginosa (strain PA7)).